The sequence spans 52 residues: Lysis protein for colicin N (52 aa).

An N-terminal signal peptide occupies residues 1–17 (MCGKILLILFFIMTLSA). The N-palmitoyl cysteine moiety is linked to residue cysteine 18. Cysteine 18 is lipidated: S-diacylglycerol cysteine.

It is found in the cell outer membrane. Its function is as follows. Lysis proteins are required for both colicin release and partial cell lysis. The polypeptide is Lysis protein for colicin N (cnl) (Escherichia coli).